Reading from the N-terminus, the 353-residue chain is MYIPSARTAIVQDDKGGLKIDRNAPMPQPRPNELLVQVKAVAINPCDHKMYERFPTPGAVDGCDFAGIVVQLGSDVKTFQIGDRVCGAVHGSNPSRPESGTFAEYTVSDGEFTLKLPPNLSFREAMGLGTTGLSTIGMAIYKGLMLPGSPLEPAEKPRTVLVHGASSSVGTMALQLIRLMGHIPIATCSPRNFELVKKYGAEEVFDYNDPECGQQIKQYTGNTLAYIIDPFTDVKSVALCYEAMGRAGGRYACLEMYPEFALERRSIKVFFALGMALLGHSLDLAYGYERDEDPEMRSFGIGWYKVLQELLYQGKLRPHPLRELEGGFEGILKGVQMVKNKEVSGQKLVVSLE.

Cys46–Lys49 lines the NADP(+) pocket. Thr131–Met138 is a substrate binding site. Residues Ser189–Asn192, Tyr207, and Leu254–Glu255 each bind NADP(+). Gly274–Leu278 is a binding site for substrate. Val343 to Ser344 is a binding site for NADP(+).

This sequence belongs to the zinc-containing alcohol dehydrogenase family. In terms of assembly, monomer.

The protein operates within secondary metabolite biosynthesis. In terms of biological role, trans-enoyl reductase; part of the gene cluster that mediates the biosynthesis of a tyrosine-derived cytochalasan acting as a fungal signal recognized by resistant rice plants and leads to avirulence in Pi33 resistant rice cultivars. The first step in the pathway is catalyzed by the hybrid PKS-NRPS ACE1, assisted by the enoyl reductase RAP1, that are responsible for fusion of the tyrosine precursor and the polyketide backbone. The polyketide synthase module (PKS) of ACE1 is responsible for the synthesis of the polyketide backbone and the downstream nonribosomal peptide synthetase (NRPS) amidates the carboxyl end of the polyketide with the tyrosine precursor. Because ACE1 lacks a designated enoylreductase (ER) domain, the required activity is provided the enoyl reductase RAP1. Reduction by the hydrolyase ORFZ, followed by dehydration and intra-molecular Diels-Alder cyclization by the Diels-Alderase ORF3 then yield the required isoindolone-fused macrocycle. A number of oxidative steps catalyzed by the tailoring enzymes identified within the cluster, including cytochrome P450 monooxygenases CYP1 to CYP4, the FAD-linked oxidoreductase OXR2 and the short-chain dehydrogenase/reductase OXR1, are further required to afford the final cytochalasans that confer avirulence and which have still to be identified. The monooxygenase CYP1 has been shown to be a site-selective C-18 hydroxylase whereas the function of CYP3 is the site-selective epoxidation of the C-6/C-7 olefin that is present in some intermediate compounds. Finally, SYN2 and RAP2 are not required for avirulence in Pi33 resistant rice cultivars. This chain is Trans-enoyl reductase RAP2, found in Pyricularia oryzae (strain 70-15 / ATCC MYA-4617 / FGSC 8958) (Rice blast fungus).